The chain runs to 206 residues: Putative transporter protein AmiS2 (206 aa).

Transmembrane regions (helical) follow at residues 4-24, 29-49, 56-76, 86-106, 113-133, 142-162, and 173-193; these read VGLL…LGTV, ASVL…VMLI, SAVL…YVGI, GIGW…FLSF, VFGV…LVLG, FTGW…AFLI, and VAAG…ILAA.

It belongs to the AmiS/UreI family.

Its subcellular location is the cell membrane. Its function is as follows. Possible transporter that might be responsible for the adsorption of amidase substrates or release of their hydrolysis products. This Rhodococcus erythropolis (Arthrobacter picolinophilus) protein is Putative transporter protein AmiS2 (amiS2).